Here is a 146-residue protein sequence, read N- to C-terminus: Cytochrome c' (146 aa).

A signal peptide spans 1–21 (MKLRIATIAGLVVLGSGFAVA). The heme c site is built by R29, T86, A87, C134, C137, and H138.

In terms of assembly, monomer. Post-translationally, binds 1 heme c group covalently per subunit.

Cytochrome c' is the most widely occurring bacterial c-type cytochrome. Cytochromes c' are high-spin proteins and the heme has no sixth ligand. Their exact function is not known. This Rhodopseudomonas palustris (strain ATCC BAA-98 / CGA009) protein is Cytochrome c' (cycA).